Reading from the N-terminus, the 79-residue chain is D-alanyl carrier protein (79 aa).

In terms of domain architecture, Carrier spans 1–77 (MTVEEKIIDA…KIVEGVKELQ (77 aa)). Ser-35 is modified (O-(pantetheine 4'-phosphoryl)serine).

The protein belongs to the DltC family. In terms of processing, 4'-phosphopantetheine is transferred from CoA to a specific serine of apo-DCP.

It is found in the cytoplasm. It participates in cell wall biogenesis; lipoteichoic acid biosynthesis. Carrier protein involved in the D-alanylation of lipoteichoic acid (LTA). The loading of thioester-linked D-alanine onto DltC is catalyzed by D-alanine--D-alanyl carrier protein ligase DltA. The DltC-carried D-alanyl group is further transferred to cell membrane phosphatidylglycerol (PG) by forming an ester bond, probably catalyzed by DltD. D-alanylation of LTA plays an important role in modulating the properties of the cell wall in Gram-positive bacteria, influencing the net charge of the cell wall. In Streptococcus uberis (strain ATCC BAA-854 / 0140J), this protein is D-alanyl carrier protein.